A 341-amino-acid chain; its full sequence is MPSIRLADLAEQLDAELHGDGDIVITGVASMQSATTGHITFMVNPKYREHLGLCQASAVVMTQDDLPFAKSAALVVKNPYLTYARMAQILDTTPQPAQNIAPSAVIDATATLGSNVSVGANAVIESGVQLGDNVVIGAGCFVGKNSKIGAGSRLWANVTIYHDIQIGENCLIQSSTVIGADGFGYANDRGNWVKIPQLGRVIIGDRVEIGACTTIDRGALDDTVIGNGVIIDNQCQIAHNVVIGDNTAVAGGVIMAGSLKIGRYCMIGGASVINGHMEICDKVTVTGMGMVMRPITEPGVYSSGIPLQPNKVWRKTAALVMNIDDMSKRLKAIERKVNQQD.

His-239 serves as the catalytic Proton acceptor.

It belongs to the transferase hexapeptide repeat family. LpxD subfamily. In terms of assembly, homotrimer.

It carries out the reaction a UDP-3-O-[(3R)-3-hydroxyacyl]-alpha-D-glucosamine + a (3R)-hydroxyacyl-[ACP] = a UDP-2-N,3-O-bis[(3R)-3-hydroxyacyl]-alpha-D-glucosamine + holo-[ACP] + H(+). The enzyme catalyses UDP-3-O-[(3R)-3-hydroxytetradecanoyl]-alpha-D-glucosamine + (3R)-hydroxytetradecanoyl-[ACP] = UDP-2-N,3-O-bis[(3R)-3-hydroxytetradecanoyl]-alpha-D-glucosamine + holo-[ACP] + H(+). It participates in glycolipid biosynthesis; lipid IV(A) biosynthesis; lipid IV(A) from (3R)-3-hydroxytetradecanoyl-[acyl-carrier-protein] and UDP-N-acetyl-alpha-D-glucosamine: step 3/6. Functionally, catalyzes the N-acylation of UDP-3-O-(hydroxytetradecanoyl)glucosamine using 3-hydroxytetradecanoyl-ACP as the acyl donor. Is involved in the biosynthesis of lipid A, a phosphorylated glycolipid that anchors the lipopolysaccharide to the outer membrane of the cell. The chain is UDP-3-O-(3-hydroxymyristoyl)glucosamine N-acyltransferase from Salmonella paratyphi A (strain ATCC 9150 / SARB42).